The primary structure comprises 346 residues: Peripherin-2 (346 aa).

The Cytoplasmic portion of the chain corresponds to 1 to 24; that stretch reads MALLKVKFDQKKRVKLAQGLWLMN. The helical transmembrane segment at 25 to 43 threads the bilayer; sequence WLSVLAGIVLFSLGLFLKI. The Lumenal portion of the chain corresponds to 44–61; sequence ELRKRSDVMDNSESHFVP. Residues 62 to 80 form a helical membrane-spanning segment; it reads NSLIGVGVLSCVFNSLAGK. At 81–99 the chain is on the cytoplasmic side; that stretch reads ICYDALDPAKYAKWKPWLK. The helical transmembrane segment at 100-123 threads the bilayer; it reads LYLAVCVFFNVILFLVALCCFLLR. The Lumenal segment spans residues 124-264; sequence GSLESTLAYG…LNYYSSLMNS (141 aa). Asn229 is a glycosylation site (N-linked (GlcNAc...) asparagine). A helical transmembrane segment spans residues 265 to 290; the sequence is MGVVTLLIWLFEVSITAGLRFLHTAL. Residues 291–346 lie on the Cytoplasmic side of the membrane; sequence ESVSNPEDPECESEGWLLENSVSETWKAFLESFKKLGKSNQVEAEAADAGQAPEAG. An interaction with MREG region spans residues 341–346; that stretch reads QAPEAG.

Belongs to the PRPH2/ROM1 family. As to quaternary structure, homodimer; disulfide-linked. Forms a homotetramer. Forms a heterotetramer with ROM1. Homotetramer and heterotetramer core complexes go on to form higher order complexes by formation of intermolecular disulfide bonds. Interacts with MREG. Interacts with STX3. Interacts with SNAP25. Retina (photoreceptor). In rim region of ROS (rod outer segment) disks.

Its subcellular location is the membrane. It is found in the cell projection. It localises to the cilium. The protein resides in the photoreceptor outer segment. The protein localises to the photoreceptor inner segment. Functionally, essential for retina photoreceptor outer segment disk morphogenesis, may also play a role with ROM1 in the maintenance of outer segment disk structure. Required for the maintenance of retinal outer nuclear layer thickness. Required for the correct development and organization of the photoreceptor inner segment. This chain is Peripherin-2 (Prph2), found in Rattus norvegicus (Rat).